The chain runs to 259 residues: 7alpha-hydroxysteroid dehydrogenase (259 aa).

Residues Ile18, 37–38 (DY), and Asn90 contribute to the NAD(+) site. Positions 145 and 158 each coordinate glycochenodeoxycholate. Residues Tyr158, Lys162, and 191–193 (ILT) each bind NAD(+). The active-site Proton acceptor is Tyr158.

The protein belongs to the short-chain dehydrogenases/reductases (SDR) family. Homotetramer.

The enzyme catalyses cholate + NAD(+) = 3alpha,12alpha-dihydroxy-7-oxo-5beta-cholanate + NADH + H(+). It carries out the reaction chenodeoxycholate + NAD(+) = 7-oxolithocholate + NADH + H(+). It catalyses the reaction taurochenodeoxycholate + NAD(+) = 7-oxotaurolithocholate + NADH + H(+). The catalysed reaction is glycochenodeoxycholate + NAD(+) = 7-oxoglycolithocholate + NADH + H(+). The enzyme catalyses taurocholate + NAD(+) = 7-oxo-taurodeoxycholate + NADH + H(+). It carries out the reaction glycocholate + NAD(+) = 7-oxo-glycodeoxycholate + NADH + H(+). It catalyses the reaction an aromatic primary alcohol + NAD(+) = an aromatic aldehyde + NADH + H(+). The catalysed reaction is benzyl alcohol + NAD(+) = benzaldehyde + NADH + H(+). The enzyme catalyses 4-cyanobenzyl alcohol + NAD(+) = 4-cyanobenzaldehyde + NADH + H(+). It carries out the reaction 4-acetoxybenzyl alcohol + NAD(+) = 4-acetoxybenzaldehyde + NADH + H(+). It catalyses the reaction 4-(trifluoromethyl)benzyl alcohol + NAD(+) = 4-(trifluoromethyl)benzaldehyde + NADH + H(+). Its function is as follows. 7alpha-hydroxysteroid dehydrogenase involved in the metabolism of bile acids in the gut. Catalyzes the NAD(+)-dependent oxidation of the 7alpha-hydroxy group of 7alpha-hydroxysteroids, such as cholate, chenodeoxycholate, taurochenodeoxycholate, glycochenodeoxycholate, taurocholate and glycocholate, to the corresponding 7-oxosteroids. Since it is also able to catalyze the reduction of nonsteroidal carbonyl compounds such as various benzaldehyde analogs to their corresponding benzyl alcohols, this enzyme may also function in the detoxification of xenobiotics containing carbonyl groups in the large intestine. This chain is 7alpha-hydroxysteroid dehydrogenase, found in Bacteroides fragilis (strain ATCC 25285 / DSM 2151 / CCUG 4856 / JCM 11019 / LMG 10263 / NCTC 9343 / Onslow / VPI 2553 / EN-2).